We begin with the raw amino-acid sequence, 148 residues long: uncharacterized protein (148 aa).

The first 18 residues, 1 to 18, serve as a signal peptide directing secretion; that stretch reads MKIILTVLAGVGLLSAGG. Cys-19 carries the N-palmitoyl cysteine lipid modification. Residue Cys-19 is the site of S-diacylglycerol cysteine attachment.

Its subcellular location is the cell membrane. This is an uncharacterized protein from Bacillus subtilis (strain 168).